The primary structure comprises 627 residues: Siderophore iron transporter ARN1 (627 aa).

The Extracellular portion of the chain corresponds to 1–70; the sequence is MESVHSRDPV…TEIIGSAYNK (70 aa). Residues 71 to 91 form a helical membrane-spanning segment; it reads WYLQAILLLSAFICGYGYGLD. Over 92–110 the chain is Cytoplasmic; that stretch reads GNIRYIYTGYATSSYSEHS. A helical transmembrane segment spans residues 111–131; that stretch reads LLSTINVINAVVSAASQIIYA. The Extracellular segment spans residues 132 to 135; the sequence is RLSD. The chain crosses the membrane as a helical span at residues 136 to 156; that stretch reads VFGRLYLFISAVILYVVGTII. The Cytoplasmic segment spans residues 157–167; that stretch reads QSQAYDVQRYA. A helical membrane pass occupies residues 168 to 188; it reads AGAIFYNAGYVGVILILLIIL. Over 189-197 the chain is Extracellular; the sequence is SDFSSLKWR. Residues 198–218 traverse the membrane as a helical segment; the sequence is LLYQFVPTWPFIINTWIAGNI. The Cytoplasmic portion of the chain corresponds to 219–231; sequence TSRANPVVNWSWD. The helical transmembrane segment at 232-252 threads the bilayer; that stretch reads VGMWAFIFPLSCVPIVLCMLH. Residues 253–290 lie on the Extracellular side of the membrane; it reads MQWRARKTPEWHALKGQKSYYQEHGFIKILKQLFWMLD. A helical transmembrane segment spans residues 291–311; sequence VVGVLLMGCSLGCILVPLTLA. Over 312-323 the chain is Cytoplasmic; the sequence is GGVKTTWNDSRL. The helical transmembrane segment at 324–344 threads the bilayer; it reads IGPFVLGFVLIPILWIWEYRF. The Extracellular portion of the chain corresponds to 345–367; sequence ARDPILPYRLVKDRAVWSSMGIS. Residues 368–388 traverse the membrane as a helical segment; the sequence is FLIDFIYYMAADYLYTVMIVA. Residues 389–398 lie on the Cytoplasmic side of the membrane; the sequence is VNESVKSATR. Residues 399–419 form a helical membrane-spanning segment; it reads IATLSSFVSTVASPFFALLVT. Topologically, residues 420-424 are extracellular; sequence RCTRL. The helical transmembrane segment at 425-445 threads the bilayer; sequence KPFIMFGCALWMVAMGLLYHF. Residues 446–454 lie on the Cytoplasmic side of the membrane; the sequence is RGGSQSHSG. The helical transmembrane segment at 455–475 threads the bilayer; the sequence is IIGALCVWGVGTTLFTYPVTV. Residues 476-563 are Extracellular-facing; that stretch reads SVQSAVSHEN…LMNAYKYVQR (88 aa). Residues 564-584 form a helical membrane-spanning segment; the sequence is LETIVALVFCVPLIAFSLCLR. The Cytoplasmic segment spans residues 585 to 627; the sequence is DPKLTDTVAVEYIEDGEYVDTKDNDPILDWFEKLPSKFTFKRE.

This sequence belongs to the major facilitator superfamily.

The protein localises to the cell membrane. Its subcellular location is the endosome membrane. Its function is as follows. Involved in the transport of siderophore ferrichrome and so has a role in iron homeostasis. This is Siderophore iron transporter ARN1 (ARN1) from Saccharomyces cerevisiae (strain ATCC 204508 / S288c) (Baker's yeast).